The sequence spans 905 residues: Protein translocase subunit SecA (905 aa).

ATP contacts are provided by residues glutamine 87, 105-109, and aspartate 509; that span reads GEGKT. Zn(2+) contacts are provided by cysteine 890, cysteine 892, cysteine 901, and histidine 902.

Belongs to the SecA family. In terms of assembly, monomer and homodimer. Part of the essential Sec protein translocation apparatus which comprises SecA, SecYEG and auxiliary proteins SecDF-YajC and YidC. Zn(2+) is required as a cofactor.

The protein resides in the cell inner membrane. Its subcellular location is the cytoplasm. It catalyses the reaction ATP + H2O + cellular proteinSide 1 = ADP + phosphate + cellular proteinSide 2.. Its function is as follows. Part of the Sec protein translocase complex. Interacts with the SecYEG preprotein conducting channel. Has a central role in coupling the hydrolysis of ATP to the transfer of proteins into and across the cell membrane, serving both as a receptor for the preprotein-SecB complex and as an ATP-driven molecular motor driving the stepwise translocation of polypeptide chains across the membrane. The protein is Protein translocase subunit SecA of Acinetobacter baylyi (strain ATCC 33305 / BD413 / ADP1).